A 613-amino-acid chain; its full sequence is Zinc metalloproteinase-disintegrin-like atragin (613 aa).

Residues 1-20 form the signal peptide; it reads MIQALLVIICLAVFPHQGSS. Positions 21-191 are excised as a propeptide; the sequence is IILESGNVND…DESIEKTSQL (171 aa). One can recognise a Peptidase M12B domain in the interval 205–400; sequence KYIEFYVVVD…DRPQCILNKP (196 aa). Ca(2+) is bound by residues glutamate 208 and aspartate 292. 2 cysteine pairs are disulfide-bonded: cysteine 316-cysteine 395 and cysteine 356-cysteine 379. 3 residues coordinate Zn(2+): histidine 341, histidine 345, and histidine 351. Cysteine 395, asparagine 398, isoleucine 410, asparagine 413, phenylalanine 415, glutamate 417, glutamate 420, and aspartate 423 together coordinate Ca(2+). A Disintegrin domain is found at 408 to 494; that stretch reads PPICGNYFVE…ECPTDVFQRN (87 aa). 15 cysteine pairs are disulfide-bonded: cysteine 411-cysteine 440, cysteine 422-cysteine 435, cysteine 424-cysteine 430, cysteine 434-cysteine 457, cysteine 448-cysteine 454, cysteine 453-cysteine 479, cysteine 466-cysteine 486, cysteine 473-cysteine 505, cysteine 498-cysteine 510, cysteine 517-cysteine 567, cysteine 532-cysteine 575, cysteine 542-cysteine 577, cysteine 545-cysteine 555, cysteine 562-cysteine 601, and cysteine 595-cysteine 606. The N-linked (GlcNAc...) asparagine glycan is linked to asparagine 436. The D/ECD-tripeptide motif lies at 472-474; it reads DCD. Aspartate 474, leucine 475, glutamate 477, aspartate 489, and valine 490 together coordinate Ca(2+). A hypervariable region that may play important roles toward cell migration region spans residues 560 to 574; the sequence is VKCGRLFCKRRNSMI.

Belongs to the venom metalloproteinase (M12B) family. P-III subfamily. P-IIIa sub-subfamily. Monomer. It depends on Zn(2+) as a cofactor. As to expression, expressed by the venom gland.

It localises to the secreted. In terms of biological role, snake venom zinc metalloproteinase that seems to inhibit cell migration. This activity is dominated by the local structure of the hyper-variable region. The protein is Zinc metalloproteinase-disintegrin-like atragin of Naja atra (Chinese cobra).